The primary structure comprises 469 residues: Glutamate--tRNA ligase 1 (469 aa).

Positions 8–18 (PSPTGYLHIGG) match the 'HIGH' region motif. The segment at 117 to 137 (TPRYDGTWRPEPGKELPPVPA) is disordered. The 'KMSKS' region signature appears at 240–244 (KLSKR). K243 lines the ATP pocket.

This sequence belongs to the class-I aminoacyl-tRNA synthetase family. Glutamate--tRNA ligase type 1 subfamily. In terms of assembly, monomer.

It is found in the cytoplasm. The enzyme catalyses tRNA(Glu) + L-glutamate + ATP = L-glutamyl-tRNA(Glu) + AMP + diphosphate. Functionally, catalyzes the attachment of glutamate to tRNA(Glu) in a two-step reaction: glutamate is first activated by ATP to form Glu-AMP and then transferred to the acceptor end of tRNA(Glu). The protein is Glutamate--tRNA ligase 1 of Aliarcobacter butzleri (strain RM4018) (Arcobacter butzleri).